The chain runs to 838 residues: Protein translocase subunit SecA (838 aa).

ATP-binding positions include Q86, 104 to 108 (GEGKT), and D493. Disordered stretches follow at residues 517 to 536 (RRID…PGSS) and 789 to 838 (KVAE…CCGQ). Basic and acidic residues predominate over residues 801 to 819 (TDGDSKAKRQPVRKKETVG). 4 residues coordinate Zn(2+): C824, C826, C835, and C836.

The protein belongs to the SecA family. Monomer and homodimer. Part of the essential Sec protein translocation apparatus which comprises SecA, SecYEG and auxiliary proteins SecDF. Other proteins may also be involved. The cofactor is Zn(2+).

It is found in the cell membrane. It localises to the cytoplasm. The catalysed reaction is ATP + H2O + cellular proteinSide 1 = ADP + phosphate + cellular proteinSide 2.. Its function is as follows. Part of the Sec protein translocase complex. Interacts with the SecYEG preprotein conducting channel. Has a central role in coupling the hydrolysis of ATP to the transfer of proteins into and across the cell membrane, serving as an ATP-driven molecular motor driving the stepwise translocation of polypeptide chains across the membrane. The chain is Protein translocase subunit SecA from Halalkalibacterium halodurans (strain ATCC BAA-125 / DSM 18197 / FERM 7344 / JCM 9153 / C-125) (Bacillus halodurans).